A 73-amino-acid chain; its full sequence is Translation initiation factor IF-1 (73 aa).

An S1-like domain is found at 1-73; it reads MAKKEDTLVL…TKARVVYRHR (73 aa).

This sequence belongs to the IF-1 family. In terms of assembly, component of the 30S ribosomal translation pre-initiation complex which assembles on the 30S ribosome in the order IF-2 and IF-3, IF-1 and N-formylmethionyl-tRNA(fMet); mRNA recruitment can occur at any time during PIC assembly.

Its subcellular location is the cytoplasm. Its function is as follows. One of the essential components for the initiation of protein synthesis. Stabilizes the binding of IF-2 and IF-3 on the 30S subunit to which N-formylmethionyl-tRNA(fMet) subsequently binds. Helps modulate mRNA selection, yielding the 30S pre-initiation complex (PIC). Upon addition of the 50S ribosomal subunit IF-1, IF-2 and IF-3 are released leaving the mature 70S translation initiation complex. The sequence is that of Translation initiation factor IF-1 from Chlamydia pneumoniae (Chlamydophila pneumoniae).